We begin with the raw amino-acid sequence, 697 residues long: Polyribonucleotide nucleotidyltransferase (697 aa).

Mg(2+) contacts are provided by Asp-484 and Asp-490. In terms of domain architecture, KH spans 551 to 610; it reads PRITTIWVKTDKIRDVIGSGGKNIRGITEATGVSIDIEDSGRINIASTSKEACDKAIKMI. The S1 motif domain maps to 620–688; sequence GKLYMGTVKK…KQGKIKLSRK (69 aa).

It belongs to the polyribonucleotide nucleotidyltransferase family. The cofactor is Mg(2+).

Its subcellular location is the cytoplasm. It catalyses the reaction RNA(n+1) + phosphate = RNA(n) + a ribonucleoside 5'-diphosphate. In terms of biological role, involved in mRNA degradation. Catalyzes the phosphorolysis of single-stranded polyribonucleotides processively in the 3'- to 5'-direction. The chain is Polyribonucleotide nucleotidyltransferase from Geobacter sulfurreducens (strain ATCC 51573 / DSM 12127 / PCA).